The following is a 156-amino-acid chain: Type II secretion system core protein G (156 aa).

The propeptide at 1–22 (MQQSQRGCGQNSYGQSGYRQRG) is leader sequence. Phe-23 is modified (N-methylphenylalanine). A helical membrane pass occupies residues 23 to 43 (FTLLEIMVVIVILGVLASLVV).

The protein belongs to the GSP G family. In terms of assembly, type II secretion system is composed of four main components: the outer membrane complex, the inner membrane complex, the cytoplasmic secretion ATPase and the periplasm-spanning pseudopilus. Forms homomultimers. Cleaved by the prepilin peptidase. Post-translationally, methylated by prepilin peptidase at the amino group of the N-terminal phenylalanine once the leader sequence is cleaved.

Its subcellular location is the cell inner membrane. Its function is as follows. Core component of the type II secretion system required for the energy-dependent secretion of extracellular factors such as proteases and toxins from the periplasm. Pseudopilin (pilin-like) protein that polymerizes to form the pseudopilus. Further polymerization triggers pseudopilus growth. This is Type II secretion system core protein G (outG) from Pectobacterium carotovorum subsp. carotovorum (Erwinia carotovora subsp. carotovora).